Reading from the N-terminus, the 271-residue chain is Bifunctional protein FolD (271 aa).

NADP(+)-binding positions include 154-156 (GRS), threonine 181, and isoleucine 222.

It belongs to the tetrahydrofolate dehydrogenase/cyclohydrolase family. As to quaternary structure, homodimer.

The catalysed reaction is (6R)-5,10-methylene-5,6,7,8-tetrahydrofolate + NADP(+) = (6R)-5,10-methenyltetrahydrofolate + NADPH. It catalyses the reaction (6R)-5,10-methenyltetrahydrofolate + H2O = (6R)-10-formyltetrahydrofolate + H(+). Its pathway is one-carbon metabolism; tetrahydrofolate interconversion. Catalyzes the oxidation of 5,10-methylenetetrahydrofolate to 5,10-methenyltetrahydrofolate and then the hydrolysis of 5,10-methenyltetrahydrofolate to 10-formyltetrahydrofolate. The polypeptide is Bifunctional protein FolD (Thermosipho melanesiensis (strain DSM 12029 / CIP 104789 / BI429)).